The chain runs to 447 residues: N-succinylarginine dihydrolase (447 aa).

Substrate is bound by residues 19–28 (AGLSFGNEAS), asparagine 110, and 137–138 (HR). The active site involves glutamate 174. Residue arginine 212 coordinates substrate. The active site involves histidine 248. Residues aspartate 250 and asparagine 359 each coordinate substrate. The active-site Nucleophile is cysteine 365.

The protein belongs to the succinylarginine dihydrolase family. As to quaternary structure, homodimer.

It carries out the reaction N(2)-succinyl-L-arginine + 2 H2O + 2 H(+) = N(2)-succinyl-L-ornithine + 2 NH4(+) + CO2. It functions in the pathway amino-acid degradation; L-arginine degradation via AST pathway; L-glutamate and succinate from L-arginine: step 2/5. Functionally, catalyzes the hydrolysis of N(2)-succinylarginine into N(2)-succinylornithine, ammonia and CO(2). The sequence is that of N-succinylarginine dihydrolase from Escherichia coli (strain ATCC 8739 / DSM 1576 / NBRC 3972 / NCIMB 8545 / WDCM 00012 / Crooks).